Reading from the N-terminus, the 77-residue chain is uncharacterized protein (77 aa).

This is an uncharacterized protein from Rickettsia prowazekii (strain Madrid E).